We begin with the raw amino-acid sequence, 478 residues long: Septin-4 (478 aa).

The interval 1-115 (MDRSLGWQGN…RSPWGKLDPY (115 aa)) is disordered. Residues 13 to 26 (PEDRTEAGIKRFLE) show a composition bias toward basic and acidic residues. Low complexity predominate over residues 95-108 (APAPLSPSARPRSP). Residues Ser117 and Ser118 each carry the phosphoserine modification. The Septin-type G domain maps to 141 to 414 (KGFDFTLMVA…ENYRAQCIQS (274 aa)). The segment at 151-158 (GESGLGKS) is G1 motif. GTP is bound by residues 151-158 (GESGLGKS) and Thr185. Residues 208–211 (DTPG) form a G3 motif region. Positions 289 to 292 (AKAD) are G4 motif. A GTP-binding site is contributed by 290–298 (KADTLTPPE). A Phosphoserine modification is found at Ser325. Positions 348 and 363 each coordinate GTP. The tract at residues 428–448 (LTRESGTDFPIPAVPPGTDPE) is disordered. Position 432 is a phosphoserine (Ser432). Thr434 carries the post-translational modification Phosphothreonine. A coiled-coil region spans residues 447 to 478 (PETEKLIREKDEELRRMQEMLHKIQKQMKENY).

The protein belongs to the TRAFAC class TrmE-Era-EngA-EngB-Septin-like GTPase superfamily. Septin GTPase family. As to quaternary structure, septins polymerize into heterooligomeric protein complexes that form filaments, and can associate with cellular membranes, actin filaments and microtubules. GTPase activity is required for filament formation. Interacts with SEPTIN8. In a mesenchymal cell line, interacts with SEPTIN9 isoform 2 variants HNA Trp-106 and Phe-111, but not the wild type SEPTIN9. Component of a septin core octameric complex consisting of SEPTIN12, SEPTIN7, SEPTIN6 and SEPTIN2 or SEPTIN4 in the order 12-7-6-2-2-6-7-12 or 12-7-6-4-4-6-7-12. Interacts with SEPTIN14 (via C-terminus). Interacts with DYRK1A. Interacts with SLC6A3/DAT and SNCA/alpha-synuclein. Interacts with STX1A; in the striatum. Interacts with XIAP (via BIR3 domain) following the induction of apoptosis. Interacts with AREL1 (via HECT domain); in the cytoplasm following induction of apoptosis. In terms of assembly, part of a complex composed of SEPTIN4 isoform ARTS, XIAP and BCL2, within the complex interacts with both BCL2 (via BH3 domain) and XIAP, ARTS acts as a scaffold protein and stabilizes the complex. Interacts with XIAP (via BIR3 domain) following the induction of apoptosis. Post-translationally, phosphorylated by DYRK1A. In terms of processing, ubiquitinated by AREL1. Widely expressed in adult and fetal tissues with highest expression in adult brain (at protein level), heart, liver and adrenal gland and fetal heart, kidney, liver and lung. Expressed in presynaptic terminals of dopaminergic neurons projecting from the substantia nigra pars compacta to the striatum (at protein level). Expressed in axonal varicosities in dopaminergic nerve terminals (at protein level). Expressed in the putamen and in the adjacent cerebral cortex (at protein level). Expressed in colonic crypts (at protein level). Also expressed in colorectal cancers and malignant melanomas. Expressed in platelets. As to expression, highly expressed in the brain and heart.

The protein localises to the cytoplasm. It is found in the cell projection. Its subcellular location is the cilium. The protein resides in the flagellum. It localises to the cytoplasmic vesicle. The protein localises to the secretory vesicle. It is found in the axon. Its subcellular location is the dendrite. The protein resides in the perikaryon. It localises to the synapse. The protein localises to the mitochondrion. It is found in the nucleus. Filament-forming cytoskeletal GTPase. Pro-apoptotic protein involved in LGR5-positive intestinal stem cell and Paneth cell expansion in the intestines, via its interaction with XIAP. May also play a role in the regulation of cell fate in the intestine. Positive regulator of apoptosis involved in hematopoietic stem cell homeostasis; via its interaction with XIAP. Negative regulator of repair and hair follicle regeneration in response to injury, due to inhibition of hair follicle stem cell proliferation, potentially via its interaction with XIAP. Plays an important role in male fertility and sperm motility. During spermiogenesis, essential for the establishment of the annulus (a fibrous ring structure connecting the midpiece and the principal piece of the sperm flagellum) which is a requisite for the structural and mechanical integrity of the sperm. Involved in the migration of cortical neurons and the formation of neuron leading processes during embryonic development. Required for dopaminergic metabolism in presynaptic autoreceptors; potentially via activity as a presynaptic scaffold protein. Functionally, required for the induction of cell death mediated by TGF-beta and possibly by other apoptotic stimuli. Induces apoptosis through binding and inhibition of XIAP resulting in significant reduction in XIAP levels, leading to caspase activation and cell death. Mediates the interaction between BCL2 and XIAP, thereby positively regulating the ubiquitination and degradation of BCL2 and promoting apoptosis. The chain is Septin-4 from Homo sapiens (Human).